The chain runs to 127 residues: Large ribosomal subunit protein bL19 (127 aa).

The protein belongs to the bacterial ribosomal protein bL19 family.

In terms of biological role, this protein is located at the 30S-50S ribosomal subunit interface and may play a role in the structure and function of the aminoacyl-tRNA binding site. This is Large ribosomal subunit protein bL19 from Bradyrhizobium sp. (strain BTAi1 / ATCC BAA-1182).